The following is a 423-amino-acid chain: Putative UPF0496 protein 5 (423 aa).

Residues 1-14 show a composition bias toward basic residues; it reads MGNRHGIMRPRRLA. A disordered region spans residues 1–37; that stretch reads MGNRHGIMRPRRLASGRSAAEEEEDGEGEPGSYEAAC. Helical transmembrane passes span 224-244 and 247-267; these read IVFLTSFAALLVCSVVAAAIA and PVAAALAAAASMPVGSAGKWM.

Belongs to the UPF0496 family.

It is found in the membrane. The sequence is that of Putative UPF0496 protein 5 from Oryza sativa subsp. japonica (Rice).